The following is a 255-amino-acid chain: uncharacterized protein (255 aa).

This is an uncharacterized protein from Bacillus subtilis (strain 168).